The chain runs to 204 residues: Protein GET1 (204 aa).

The Lumenal segment spans residues 1-4; sequence MPSL. A helical transmembrane segment spans residues 5–24; that stretch reads LLIIFVTELVVQLVNTLGAT. At 25–110 the chain is on the cytoplasmic side; sequence TINDLLWRIY…KFDRTLTTTR (86 aa). Positions 72–107 form a coiled coil; it reads AKWAKLRRQHDKLLEDLEKKKASLEAARTKFDRTLT. A helical transmembrane segment spans residues 111 to 131; it reads TVSTRSVQWFLPFWYSKEPMF. The Lumenal portion of the chain corresponds to 132–155; sequence WLPYGWFPYYVEWFASFPRAPMGS. The helical transmembrane segment at 156 to 172 threads the bilayer; it reads VSIVVWQWACTAVIALM. The Cytoplasmic segment spans residues 173-204; the sequence is IEAATAALVYVAAKQSQKIRQPVPAQSEKKDS.

It belongs to the WRB/GET1 family. As to quaternary structure, interacts with GET3.

The protein localises to the endoplasmic reticulum membrane. In terms of biological role, required for the post-translational delivery of tail-anchored (TA) proteins to the endoplasmic reticulum. Acts as a membrane receptor for soluble GET3, which recognizes and selectively binds the transmembrane domain of TA proteins in the cytosol. This Podospora anserina (strain S / ATCC MYA-4624 / DSM 980 / FGSC 10383) (Pleurage anserina) protein is Protein GET1.